Here is a 449-residue protein sequence, read N- to C-terminus: UDP-N-acetylmuramoylalanine--D-glutamate ligase (449 aa).

Residue 118–124 (GTNGKTT) coordinates ATP.

Belongs to the MurCDEF family.

The protein localises to the cytoplasm. It catalyses the reaction UDP-N-acetyl-alpha-D-muramoyl-L-alanine + D-glutamate + ATP = UDP-N-acetyl-alpha-D-muramoyl-L-alanyl-D-glutamate + ADP + phosphate + H(+). It functions in the pathway cell wall biogenesis; peptidoglycan biosynthesis. Functionally, cell wall formation. Catalyzes the addition of glutamate to the nucleotide precursor UDP-N-acetylmuramoyl-L-alanine (UMA). This is UDP-N-acetylmuramoylalanine--D-glutamate ligase from Staphylococcus aureus (strain MW2).